The following is a 198-amino-acid chain: Holliday junction branch migration complex subunit RuvA (198 aa).

Positions 1–61 (MTLYKIGEIV…DYIQQTYGFK (61 aa)) are domain I. A domain II region spans residues 62–139 (TFKERLLFTD…KIIQNKEVKK (78 aa)). The flexible linker stretch occupies residues 140–144 (FDDIT). Positions 144 to 198 (TNIKELKQTLNKLGFKASDIDYAVNNISSTKELDLMVEESINLITTQMHANNQTT) are domain III.

Belongs to the RuvA family. As to quaternary structure, homotetramer. Forms an RuvA(8)-RuvB(12)-Holliday junction (HJ) complex. HJ DNA is sandwiched between 2 RuvA tetramers; dsDNA enters through RuvA and exits via RuvB. An RuvB hexamer assembles on each DNA strand where it exits the tetramer. Each RuvB hexamer is contacted by two RuvA subunits (via domain III) on 2 adjacent RuvB subunits; this complex drives branch migration. In the full resolvosome a probable DNA-RuvA(4)-RuvB(12)-RuvC(2) complex forms which resolves the HJ.

Its subcellular location is the cytoplasm. In terms of biological role, the RuvA-RuvB-RuvC complex processes Holliday junction (HJ) DNA during genetic recombination and DNA repair, while the RuvA-RuvB complex plays an important role in the rescue of blocked DNA replication forks via replication fork reversal (RFR). RuvA specifically binds to HJ cruciform DNA, conferring on it an open structure. The RuvB hexamer acts as an ATP-dependent pump, pulling dsDNA into and through the RuvAB complex. HJ branch migration allows RuvC to scan DNA until it finds its consensus sequence, where it cleaves and resolves the cruciform DNA. This is Holliday junction branch migration complex subunit RuvA from Mycoplasmopsis synoviae (strain 53) (Mycoplasma synoviae).